We begin with the raw amino-acid sequence, 173 residues long: Probable DNA-directed RNA polymerase subunit delta (173 aa).

The HTH HARE-type domain maps to 14–81 (LSMIELGVKI…GSGMWGLKRW (68 aa)). The disordered stretch occupies residues 86–173 (QAEEEITEEP…EDENDDDNTR (88 aa)). Over residues 109-173 (IDDVDDDLDV…EDENDDDNTR (65 aa)) the composition is skewed to acidic residues.

Belongs to the RpoE family. As to quaternary structure, RNAP is composed of a core of 2 alpha, a beta and a beta' subunits. The core is associated with a delta subunit and one of several sigma factors.

In terms of biological role, participates in both the initiation and recycling phases of transcription. In the presence of the delta subunit, RNAP displays an increased specificity of transcription, a decreased affinity for nucleic acids, and an increased efficiency of RNA synthesis because of enhanced recycling. This is Probable DNA-directed RNA polymerase subunit delta from Oceanobacillus iheyensis (strain DSM 14371 / CIP 107618 / JCM 11309 / KCTC 3954 / HTE831).